Here is a 141-residue protein sequence, read N- to C-terminus: Venom protein family 1 protein 1 (141 aa).

The first 17 residues, 1 to 17 (MKSFIVVLCCLFAITYG), serve as a signal peptide directing secretion. A disulfide bond links Cys62 and Cys139.

It belongs to the insect vpf1 family. As to expression, expressed by the venom gland (posterior main gland) (at protein level).

Its subcellular location is the secreted. The sequence is that of Venom protein family 1 protein 1 from Platymeris rhadamanthus (Red spot assassin bug).